A 341-amino-acid polypeptide reads, in one-letter code: tRNA N6-adenosine threonylcarbamoyltransferase (341 aa).

The Fe cation site is built by H115 and H119. Substrate is bound by residues 137–141 (IVSGG), D170, G183, D187, and N276. D304 contacts Fe cation.

It belongs to the KAE1 / TsaD family. Fe(2+) serves as cofactor.

It is found in the cytoplasm. The enzyme catalyses L-threonylcarbamoyladenylate + adenosine(37) in tRNA = N(6)-L-threonylcarbamoyladenosine(37) in tRNA + AMP + H(+). Its function is as follows. Required for the formation of a threonylcarbamoyl group on adenosine at position 37 (t(6)A37) in tRNAs that read codons beginning with adenine. Is involved in the transfer of the threonylcarbamoyl moiety of threonylcarbamoyl-AMP (TC-AMP) to the N6 group of A37, together with TsaE and TsaB. TsaD likely plays a direct catalytic role in this reaction. This chain is tRNA N6-adenosine threonylcarbamoyltransferase, found in Staphylococcus aureus (strain MSSA476).